Here is a 938-residue protein sequence, read N- to C-terminus: Isoleucine--tRNA ligase (938 aa).

The short motif at 58–68 is the 'HIGH' region element; the sequence is PYANGSIHIGH. Lysine 183 carries the N6-acetyllysine modification. Residue glutamate 561 participates in L-isoleucyl-5'-AMP binding. A 'KMSKS' region motif is present at residues 602-606; that stretch reads KMSKS. Lysine 605 lines the ATP pocket. Zn(2+) contacts are provided by cysteine 901, cysteine 904, cysteine 921, and cysteine 924.

The protein belongs to the class-I aminoacyl-tRNA synthetase family. IleS type 1 subfamily. In terms of assembly, monomer. Zn(2+) is required as a cofactor.

The protein resides in the cytoplasm. The enzyme catalyses tRNA(Ile) + L-isoleucine + ATP = L-isoleucyl-tRNA(Ile) + AMP + diphosphate. Catalyzes the attachment of isoleucine to tRNA(Ile). As IleRS can inadvertently accommodate and process structurally similar amino acids such as valine, to avoid such errors it has two additional distinct tRNA(Ile)-dependent editing activities. One activity is designated as 'pretransfer' editing and involves the hydrolysis of activated Val-AMP. The other activity is designated 'posttransfer' editing and involves deacylation of mischarged Val-tRNA(Ile). This chain is Isoleucine--tRNA ligase, found in Escherichia coli O17:K52:H18 (strain UMN026 / ExPEC).